Here is a 511-residue protein sequence, read N- to C-terminus: Glycoprotein (511 aa).

The N-terminal stretch at 1 to 16 is a signal peptide; sequence MKCLLCLAFLFIGVNC. The Virion surface portion of the chain corresponds to 17–467; that stretch reads KFTIVFPHNQ…FSGWKSSIAS (451 aa). A trimerization region spans residues 18–35; the sequence is FTIVFPHNQKGNWKNVPS. 6 disulfides stabilise this stretch: cysteine 40-cysteine 300, cysteine 75-cysteine 108, cysteine 84-cysteine 130, cysteine 169-cysteine 174, cysteine 193-cysteine 240, and cysteine 235-cysteine 269. The interval 53–172 is fusion peptide; sequence IGTALQVKMP…QFINGKCSND (120 aa). Residue asparagine 179 is glycosylated (N-linked (GlcNAc...) asparagine; by host). A trimerization region spans residues 259 to 309; sequence DLFAAAKFPECPEGSSISAPSQTSVDVSLIQDVERILDYSLCQETWSKIRA. N-linked (GlcNAc...) asparagine; by host glycosylation is present at asparagine 336. The tract at residues 383–405 is trimerization; it reads EIGPNGVLRTSSGYKFPLYMIGH. A helical transmembrane segment spans residues 468 to 488; sequence FFFIIGLIIGLFLVLRVGIYL. The S-palmitoyl cysteine; by host moiety is linked to residue cysteine 489. Topologically, residues 489–511 are intravirion; that stretch reads CIKLKHTRKRKIYADIEMNRLGK. The basolateral targeting ex vivo motif lies at 496 to 506; it reads RKRKIYADIEM.

Belongs to the vesiculovirus glycoprotein family. As to quaternary structure, homotrimer. Interacts with host LDL at target cell surface. In terms of processing, glycosylated by host. Palmitoylated by host.

The protein resides in the virion membrane. Its subcellular location is the host membrane. Functionally, attaches the virus to host LDL receptors, inducing clathrin-dependent endocytosis of the virion. In the endosome, the acidic pH induces conformational changes in the glycoprotein trimer, which trigger fusion between virus and endosomal membrane. The polypeptide is Glycoprotein (G) (Aedes (Bovine)).